We begin with the raw amino-acid sequence, 448 residues long: uncharacterized protein (448 aa).

Over residues serine 187–glycine 198 the composition is skewed to basic and acidic residues. 3 disordered regions span residues serine 187–arginine 221, leucine 243–methionine 270, and leucine 291–glycine 361. Low complexity predominate over residues leucine 243–serine 261. A compositionally biased stretch (basic and acidic residues) spans phenylalanine 307–arginine 334.

It to M.tuberculosis Rv0025 and Rv0739.

This is an uncharacterized protein from Mycobacterium tuberculosis (strain ATCC 25618 / H37Rv).